The primary structure comprises 286 residues: Beta-lactamase TEM-12 (286 aa).

Positions 1-23 are cleaved as a signal peptide; sequence MSIQHFRVALIPFFAAFCLPVFA. Ser68 serves as the catalytic Acyl-ester intermediate. Cys75 and Cys121 are disulfide-bonded. Residue Glu166 is the Proton acceptor of the active site. 232–234 contacts substrate; that stretch reads KSG.

Belongs to the class-A beta-lactamase family.

The catalysed reaction is a beta-lactam + H2O = a substituted beta-amino acid. Its function is as follows. TEM-type are the most prevalent beta-lactamases in enterobacteria; they hydrolyze the beta-lactam bond in susceptible beta-lactam antibiotics, thus conferring resistance to penicillins and cephalosporins such as ceftazidime. The protein is Beta-lactamase TEM-12 (blaT-12b) of Klebsiella oxytoca.